Consider the following 341-residue polypeptide: MKALSKLKPEEGIWMVDAPKPEVGHNDLLIKIRKTAICGTDVHIYNWDEWSQNTIPVPMVVGHEYVGEVVEIGQEVRGFQIGDRVSGEGHITCGHCRNCRAGRTHLCRNTSGVGVNREGAFAEYLVIPAFNAFKIPDDISDDLASIFDPFGNAVHTALSFDLVGEDVLITGAGPIGIMAAAVCRHVGARHVVITDVNEYRLELAKKMGATRAVNVAKEKLEDVMQDLGMTEGFDVGLEMSGVPAAFHSMLDTMNHGGKIAMLGIPGGDMAIDWSKVIFKGLIIKGIYGREMFETWYKMASLIQSGLDISPIITHHYNVDDFQAGFDAMRSGQSGKVILSWD.

Cys38 contacts Zn(2+). Active-site charge relay system residues include Thr40 and His43. Zn(2+) contacts are provided by His63, Glu64, Cys93, Cys96, Cys99, and Cys107. Residues Ile175, Asp195, Arg200, 262–264 (LGI), and 286–287 (IY) contribute to the NAD(+) site.

This sequence belongs to the zinc-containing alcohol dehydrogenase family. Homotetramer. Zn(2+) serves as cofactor.

It localises to the cytoplasm. The catalysed reaction is L-threonine + NAD(+) = (2S)-2-amino-3-oxobutanoate + NADH + H(+). Its pathway is amino-acid degradation; L-threonine degradation via oxydo-reductase pathway; glycine from L-threonine: step 1/2. Functionally, catalyzes the NAD(+)-dependent oxidation of L-threonine to 2-amino-3-ketobutyrate. The chain is L-threonine 3-dehydrogenase from Shewanella loihica (strain ATCC BAA-1088 / PV-4).